The primary structure comprises 135 residues: L-ectoine synthase (135 aa).

The protein belongs to the ectoine synthase family.

It catalyses the reaction (2S)-4-acetamido-2-aminobutanoate = L-ectoine + H2O. Its pathway is amine and polyamine biosynthesis; ectoine biosynthesis; L-ectoine from L-aspartate 4-semialdehyde: step 3/3. Its function is as follows. Catalyzes the circularization of gamma-N-acetyl-alpha,gamma-diaminobutyric acid (ADABA) to ectoine (1,4,5,6-tetrahydro-2-methyl-4-pyrimidine carboxylic acid), which is an excellent osmoprotectant. This Hyphomonas neptunium (strain ATCC 15444) protein is L-ectoine synthase.